A 306-amino-acid polypeptide reads, in one-letter code: Peroxisome biogenesis factor 10 (306 aa).

At 1 to 52 the chain is on the peroxisomal matrix side; that stretch reads MHLSAHIDPLQIILCTEIDEACIQFIKSQIEGIARACGPRMQANFEGVLIPY. The helical transmembrane segment at 53–84 threads the bilayer; it reads VDVLGKFLYRACCLRYATMGEEAARIVLAKQD. Residues 85–147 are Cytoplasmic-facing; that stretch reads RSKGLVLATT…PEAVISKEKH (63 aa). The helical transmembrane segment at 148–174 threads the bilayer; that stretch reads LVYILNSFKPILLKLVSIIRFLCLTMK. Residues 175-202 lie on the Peroxisomal matrix side of the membrane; that stretch reads GHCATVSQLLLGLKYISLDEINPEEKKK. Residues 203-219 traverse the membrane as a helical segment; sequence VLTLLLLLGSRLIASIL. The Cytoplasmic portion of the chain corresponds to 220–306; it reads QHSNSYFDQH…SSPSKIILLR (87 aa). Positions 256, 259, 271, 273, 276, 279, 290, and 293 each coordinate Zn(2+). The RING-type zinc-finger motif lies at 256–294; sequence CSLCMEFIHCPAATECGHIFCWSCINGWTSKKSECPLCR.

This sequence belongs to the pex2/pex10/pex12 family. As to quaternary structure, component of the PEX2-PEX10-PEX12 retrotranslocation channel, composed of PEX2, PEX10 and PEX12.

The protein resides in the peroxisome membrane. The enzyme catalyses S-ubiquitinyl-[E2 ubiquitin-conjugating enzyme]-L-cysteine + [acceptor protein]-L-lysine = [E2 ubiquitin-conjugating enzyme]-L-cysteine + N(6)-ubiquitinyl-[acceptor protein]-L-lysine.. Its pathway is protein modification; protein ubiquitination. Its activity is regulated as follows. The E3 ubiquitin-protein ligase activity is stimulated by PEX12. E3 ubiquitin-protein ligase component of a retrotranslocation channel required for peroxisome organization by mediating export of the PEX5 receptor from peroxisomes to the cytosol, thereby promoting PEX5 recycling. The retrotranslocation channel is composed of PEX2, PEX10 and PEX12; each subunit contributing transmembrane segments that coassemble into an open channel that specifically allows the passage of PEX5 through the peroxisomal membrane. PEX10 also regulates PEX5 recycling by acting as a E3 ubiquitin-protein ligase. When PEX5 recycling is compromised, PEX10 catalyzes polyubiquitination of PEX5 during its passage through the retrotranslocation channel, leading to its degradation. This is Peroxisome biogenesis factor 10 (pas4) from Schizosaccharomyces pombe (strain 972 / ATCC 24843) (Fission yeast).